The chain runs to 262 residues: Methanethiol S-methyltransferase (262 aa).

Helical transmembrane passes span 22 to 42 (LYSL…IGFV), 55 to 75 (PGAS…LFAV), 100 to 120 (ATYV…WQPI), 134 to 154 (AVLT…TFLI), and 195 to 215 (GFLM…VFAL).

The protein belongs to the nurim family.

The protein resides in the membrane. It catalyses the reaction methanethiol + S-adenosyl-L-methionine = dimethyl sulfide + S-adenosyl-L-homocysteine + H(+). Catalyzes the methylation of methanethiol (MeSH) to yield dimethylsulphide (DMS). This chain is Methanethiol S-methyltransferase, found in Pseudomonas deceptionensis.